The primary structure comprises 472 residues: Sarcalumenin (472 aa).

Residues 1–20 (MKRLNLLCCCVASLLLLGTA) form the signal peptide. N-linked (GlcNAc...) asparagine glycosylation occurs at Leu-59. One can recognise a Dynamin-type G domain in the interval 89-330 (ITSKPMVLFL…IENRMENKIA (242 aa)). The interval 99-106 (GPWSVGKS) is G1 motif. The tract at residues 127-128 (EP) is G2 motif. Positions 189 to 192 (DTPG) are G3 motif. Positions 254-257 (NKAD) are G4 motif. Residue Leu-278 is a region of interest, G5 motif. N-linked (GlcNAc...) asparagine glycans are attached at residues Asn-280 and Asn-388.

The protein belongs to the TRAFAC class dynamin-like GTPase superfamily. Dynamin/Fzo/YdjA family. In terms of processing, N-glycosylated.

It localises to the sarcoplasmic reticulum lumen. The protein resides in the sarcoplasmic reticulum membrane. The protein is Sarcalumenin (SRL) of Gallus gallus (Chicken).